A 250-amino-acid polypeptide reads, in one-letter code: ATP synthase subunit a (250 aa).

The next 5 helical transmembrane spans lie at 27–47 (TDTVLSTAIAGLIVIALAFYL), 86–106 (FVLPLAVTIFVFILISNWLAV), 129–149 (INYVLALALFVFVCYHTAGIW), 191–211 (IFAGGILVALIALFPPYIMWA), and 219–239 (FDLFVGAIQAFIFALLTILYF).

It belongs to the ATPase A chain family. F-type ATPases have 2 components, CF(1) - the catalytic core - and CF(0) - the membrane proton channel. CF(1) has five subunits: alpha(3), beta(3), gamma(1), delta(1), epsilon(1). CF(0) has three main subunits: a(1), b(2) and c(9-12). The alpha and beta chains form an alternating ring which encloses part of the gamma chain. CF(1) is attached to CF(0) by a central stalk formed by the gamma and epsilon chains, while a peripheral stalk is formed by the delta and b chains.

The protein resides in the cell membrane. In terms of biological role, key component of the proton channel; it plays a direct role in the translocation of protons across the membrane. This Mycobacterium bovis (strain ATCC BAA-935 / AF2122/97) protein is ATP synthase subunit a.